Reading from the N-terminus, the 365-residue chain is Flagellin 1 (365 aa).

This sequence belongs to the bacterial flagellin family.

The protein resides in the secreted. It localises to the bacterial flagellum. Functionally, flagellin is the subunit protein which polymerizes to form the filaments of bacterial flagella. In Proteus mirabilis, this protein is Flagellin 1 (fliC1).